The sequence spans 260 residues: Phosphate import ATP-binding protein PstB (260 aa).

An ABC transporter domain is found at 14-255 (VQVKNLAFYY…PRNKQTEDYI (242 aa)). 46–53 (GPSGCGKS) contacts ATP.

Belongs to the ABC transporter superfamily. Phosphate importer (TC 3.A.1.7) family. The complex is composed of two ATP-binding proteins (PstB), two transmembrane proteins (PstC and PstA) and a solute-binding protein (PstS).

It is found in the cell inner membrane. It catalyses the reaction phosphate(out) + ATP + H2O = ADP + 2 phosphate(in) + H(+). Its function is as follows. Part of the ABC transporter complex PstSACB involved in phosphate import. Responsible for energy coupling to the transport system. This chain is Phosphate import ATP-binding protein PstB, found in Syntrophotalea carbinolica (strain DSM 2380 / NBRC 103641 / GraBd1) (Pelobacter carbinolicus).